A 491-amino-acid polypeptide reads, in one-letter code: Ligand-gated ion channel 50 (491 aa).

Residues 1–19 form the signal peptide; it reads MRFLLVLQLVFFYFSAATT. 2 N-linked (GlcNAc...) asparagine glycosylation sites follow: asparagine 55 and asparagine 101. An intrachain disulfide couples cysteine 157 to cysteine 171. 3 helical membrane-spanning segments follow: residues 241 to 261, 265 to 287, and 302 to 322; these read LFQS…GFFF, SVSA…FGNV, and VWMI…AIVC. The N-linked (GlcNAc...) asparagine glycan is linked to asparagine 418. The helical transmembrane segment at 465-485 threads the bilayer; the sequence is MIMFPLSFLIFNVVYWSIYFM.

Belongs to the ligand-gated ion channel (TC 1.A.9) family.

The protein localises to the postsynaptic cell membrane. The protein resides in the cell membrane. The protein is Ligand-gated ion channel 50 (lgc-50) of Caenorhabditis elegans.